Reading from the N-terminus, the 239-residue chain is Fatty acid metabolism regulator protein (239 aa).

The 69-residue stretch at 6-74 (QSPAGFAEEY…HGKPTQVNNF (69 aa)) folds into the HTH gntR-type domain. Residues 34-53 (ERELSELIGVTRTTLREVLQ) constitute a DNA-binding region (H-T-H motif).

As to quaternary structure, homodimer.

The protein localises to the cytoplasm. Multifunctional regulator of fatty acid metabolism. The protein is Fatty acid metabolism regulator protein of Edwardsiella ictaluri (strain 93-146).